A 285-amino-acid chain; its full sequence is MKLCGFDIGLDQPFFLIAGPCVVESEQLQMDTAGTLKEITASLGIPFIFKSSYDKANRSSGTSFRGPGMEKGLQILAKVKRELGLPILTDVHSEAEITAVAAVVDVLQTPAFLCRQTDFIHAVAQSGRPVNIKKGQFLAPGDMKNVIDKARAAAREKGLDEDRFMACERGASFGYNNLVSDMRSLAIMRETRAPVVFDATHSVQLPGGMGTSSGGQREMVPVLARAAVAVGIAGLFMETHPDPANAMSDGPNAVPLKHMKALLETLLELDRVTKKNGYLENSFSA.

Belongs to the KdsA family.

It is found in the cytoplasm. The catalysed reaction is D-arabinose 5-phosphate + phosphoenolpyruvate + H2O = 3-deoxy-alpha-D-manno-2-octulosonate-8-phosphate + phosphate. The protein operates within carbohydrate biosynthesis; 3-deoxy-D-manno-octulosonate biosynthesis; 3-deoxy-D-manno-octulosonate from D-ribulose 5-phosphate: step 2/3. Its pathway is bacterial outer membrane biogenesis; lipopolysaccharide biosynthesis. This is 2-dehydro-3-deoxyphosphooctonate aldolase from Polaromonas naphthalenivorans (strain CJ2).